The primary structure comprises 116 residues: Small ribosomal subunit protein uS13m (116 aa).

This sequence belongs to the universal ribosomal protein uS13 family. In terms of assembly, part of the small ribosomal subunit.

The protein resides in the mitochondrion. Functionally, located at the top of the head of the small subunit, it contacts several helices of the 18S rRNA. The polypeptide is Small ribosomal subunit protein uS13m (RPS13) (Nicotiana tabacum (Common tobacco)).